The sequence spans 540 residues: Glucose-6-phosphate isomerase (540 aa).

Catalysis depends on Glu350, which acts as the Proton donor. Residues His381 and Lys503 contribute to the active site.

This sequence belongs to the GPI family.

The protein localises to the cytoplasm. It catalyses the reaction alpha-D-glucose 6-phosphate = beta-D-fructose 6-phosphate. Its pathway is carbohydrate biosynthesis; gluconeogenesis. It functions in the pathway carbohydrate degradation; glycolysis; D-glyceraldehyde 3-phosphate and glycerone phosphate from D-glucose: step 2/4. Functionally, catalyzes the reversible isomerization of glucose-6-phosphate to fructose-6-phosphate. This is Glucose-6-phosphate isomerase from Burkholderia pseudomallei (strain 1710b).